Reading from the N-terminus, the 204-residue chain is Casparian strip membrane protein 2 (204 aa).

The Cytoplasmic segment spans residues 1–42 (MKNESTTIDVPAESSSAMKGKAPLIGVARDHTTSGSGGYNRG). Residues 43–63 (LSIFDFLLRLAAIVAALAAAA) traverse the membrane as a helical segment. Residues 64–92 (TMGTSDETLPFFTQFLQFEASYDDLPTFQ) are Extracellular-facing. A helical membrane pass occupies residues 93 to 113 (FFVIAMALVGGYLVLSLPISV). Over 114–125 (VTILRPLATAPR) the chain is Cytoplasmic. The helical transmembrane segment at 126–146 (LLLLVLDTAVLALNTAAASSA) threads the bilayer. Topologically, residues 147–178 (AAISYLAHSGNQNTNWLPICQQFGDFCQKSSG) are extracellular. The chain crosses the membrane as a helical span at residues 179-199 (AVVSAFISVVFFTILVVISGV). Topologically, residues 200–204 (ALKRH) are cytoplasmic.

Belongs to the Casparian strip membrane proteins (CASP) family. As to quaternary structure, homodimer and heterodimers.

The protein resides in the cell membrane. Its function is as follows. Regulates membrane-cell wall junctions and localized cell wall deposition. Required for establishment of the Casparian strip membrane domain (CSD) and the subsequent formation of Casparian strips, a cell wall modification of the root endodermis that determines an apoplastic barrier between the intraorganismal apoplasm and the extraorganismal apoplasm and prevents lateral diffusion. The sequence is that of Casparian strip membrane protein 2 from Arabidopsis lyrata subsp. lyrata (Lyre-leaved rock-cress).